The primary structure comprises 921 residues: Isoleucine--tRNA ligase (921 aa).

The short motif at 57–67 (PYANGDIHMGH) is the 'HIGH' region element. E552 is an L-isoleucyl-5'-AMP binding site. The short motif at 593–597 (KMSKS) is the 'KMSKS' region element. K596 lines the ATP pocket. C888, C891, C908, and C911 together coordinate Zn(2+).

The protein belongs to the class-I aminoacyl-tRNA synthetase family. IleS type 1 subfamily. In terms of assembly, monomer. Requires Zn(2+) as cofactor.

It localises to the cytoplasm. The enzyme catalyses tRNA(Ile) + L-isoleucine + ATP = L-isoleucyl-tRNA(Ile) + AMP + diphosphate. Functionally, catalyzes the attachment of isoleucine to tRNA(Ile). As IleRS can inadvertently accommodate and process structurally similar amino acids such as valine, to avoid such errors it has two additional distinct tRNA(Ile)-dependent editing activities. One activity is designated as 'pretransfer' editing and involves the hydrolysis of activated Val-AMP. The other activity is designated 'posttransfer' editing and involves deacylation of mischarged Val-tRNA(Ile). This Bacillus cereus (strain G9842) protein is Isoleucine--tRNA ligase.